A 62-amino-acid polypeptide reads, in one-letter code: MITREQKNEILFLVGEIISLEKDLSFEISSEYGDAETYYELVKSIDKAENDLETYLENLTKD.

This is an uncharacterized protein from Escherichia coli (Bacteriophage T4).